Reading from the N-terminus, the 613-residue chain is Protein ECM3 (613 aa).

4 consecutive transmembrane segments (helical) span residues isoleucine 10–leucine 30, glycine 74–valine 94, glycine 106–glutamine 126, and valine 143–phenylalanine 163. A disordered region spans residues aspartate 177 to serine 256. Polar residues-rich tracts occupy residues serine 187 to aspartate 206 and glutamate 213 to serine 226. Phosphoserine is present on residues serine 291 and serine 338. Positions arginine 345–isoleucine 366 are disordered. 4 helical membrane passes run methionine 432–threonine 452, phenylalanine 471–leucine 491, methionine 546–phenylalanine 566, and phenylalanine 587–isoleucine 607.

It localises to the endoplasmic reticulum membrane. In terms of biological role, may be involved in cell wall organization and biogenesis. In Saccharomyces cerevisiae (strain ATCC 204508 / S288c) (Baker's yeast), this protein is Protein ECM3 (ECM3).